The sequence spans 510 residues: uncharacterized protein (510 aa).

Disordered regions lie at residues 1-154 (MGSP…ATFL), 208-227 (DGNH…GDLA), 234-276 (TRES…QGIL), and 368-480 (NFYT…GCPR). Residue serine 43 is modified to Phosphoserine. Residues 50–60 (PLVSQQDTSEA) are compositionally biased toward polar residues. Over residues 78-92 (EEERLGSPEDEKMDG) the composition is skewed to basic and acidic residues. Position 84 is a phosphoserine (serine 84). Composition is skewed to polar residues over residues 97–109 (SQPS…QVAN) and 118–135 (QPSS…SNRR). Serine 120 bears the Phosphoserine mark. Residues 139–151 (ASGSEEAKAASAA) show a composition bias toward low complexity. Low complexity predominate over residues 243 to 255 (SSLLTTTRGLTSG). The span at 379–395 (RTKELQLVAKEDTDSTR) shows a compositional bias: basic and acidic residues. Residues 414 to 441 (SVHQEFSSGDINTRSLQDPGNSQSSGLS) show a composition bias toward polar residues.

This is an uncharacterized protein from Rattus norvegicus (Rat).